Here is a 44-residue protein sequence, read N- to C-terminus: Large ribosomal subunit protein bL34 (44 aa).

Positions 21-44 (RMDTSGGRRILSARRRKGRKTISA) are disordered. Residues 31 to 44 (LSARRRKGRKTISA) are compositionally biased toward basic residues.

This sequence belongs to the bacterial ribosomal protein bL34 family.

This is Large ribosomal subunit protein bL34 from Endomicrobium trichonymphae.